Here is a 316-residue protein sequence, read N- to C-terminus: 4-hydroxy-3-methylbut-2-enyl diphosphate reductase (316 aa).

Position 12 (C12) interacts with [4Fe-4S] cluster. (2E)-4-hydroxy-3-methylbut-2-enyl diphosphate is bound by residues H41 and H74. Dimethylallyl diphosphate is bound by residues H41 and H74. Isopentenyl diphosphate contacts are provided by H41 and H74. C96 contacts [4Fe-4S] cluster. H124 serves as a coordination point for (2E)-4-hydroxy-3-methylbut-2-enyl diphosphate. H124 lines the dimethylallyl diphosphate pocket. Position 124 (H124) interacts with isopentenyl diphosphate. E126 functions as the Proton donor in the catalytic mechanism. T167 provides a ligand contact to (2E)-4-hydroxy-3-methylbut-2-enyl diphosphate. [4Fe-4S] cluster is bound at residue C197. (2E)-4-hydroxy-3-methylbut-2-enyl diphosphate-binding residues include S225, S226, N227, and S269. Residues S225, S226, N227, and S269 each contribute to the dimethylallyl diphosphate site. Isopentenyl diphosphate is bound by residues S225, S226, N227, and S269.

The protein belongs to the IspH family. In terms of assembly, homodimer. [4Fe-4S] cluster is required as a cofactor.

The catalysed reaction is isopentenyl diphosphate + 2 oxidized [2Fe-2S]-[ferredoxin] + H2O = (2E)-4-hydroxy-3-methylbut-2-enyl diphosphate + 2 reduced [2Fe-2S]-[ferredoxin] + 2 H(+). It carries out the reaction dimethylallyl diphosphate + 2 oxidized [2Fe-2S]-[ferredoxin] + H2O = (2E)-4-hydroxy-3-methylbut-2-enyl diphosphate + 2 reduced [2Fe-2S]-[ferredoxin] + 2 H(+). Its pathway is isoprenoid biosynthesis; dimethylallyl diphosphate biosynthesis; dimethylallyl diphosphate from (2E)-4-hydroxy-3-methylbutenyl diphosphate: step 1/1. It participates in isoprenoid biosynthesis; isopentenyl diphosphate biosynthesis via DXP pathway; isopentenyl diphosphate from 1-deoxy-D-xylulose 5-phosphate: step 6/6. In terms of biological role, catalyzes the conversion of 1-hydroxy-2-methyl-2-(E)-butenyl 4-diphosphate (HMBPP) into a mixture of isopentenyl diphosphate (IPP) and dimethylallyl diphosphate (DMAPP). Acts in the terminal step of the DOXP/MEP pathway for isoprenoid precursor biosynthesis. The chain is 4-hydroxy-3-methylbut-2-enyl diphosphate reductase from Escherichia coli (strain UTI89 / UPEC).